The following is a 495-amino-acid chain: Glucokinase (495 aa).

One can recognise a Hexokinase domain in the interval 3–483 (SALLDEAARI…SGVGAALIAL (481 aa)). Positions 57–206 (NGTEKGLYLA…GLPVRVAALV (150 aa)) are hexokinase small subdomain. Residue lysine 93 coordinates ATP. A glucose-binding region spans residues 149 to 175 (DLGFTFSFPVRQLGINKGTLIRWTKGF). Residues 207-472 (NDTVGTLMAR…KKIRIGISKD (266 aa)) form a hexokinase large subdomain region. Position 472-477 (472-477 (DGSGVG)) interacts with ATP.

The protein belongs to the hexokinase family. In terms of assembly, monomer.

It carries out the reaction D-glucose + ATP = D-glucose 6-phosphate + ADP + H(+). The catalysed reaction is a D-hexose + ATP = a D-hexose 6-phosphate + ADP + H(+). The enzyme catalyses D-mannose + ATP = D-mannose 6-phosphate + ADP + H(+). It catalyses the reaction D-glucosamine + ATP = D-glucosamine 6-phosphate + ADP + H(+). It functions in the pathway carbohydrate metabolism; hexose metabolism. It participates in carbohydrate degradation; glycolysis; D-glyceraldehyde 3-phosphate and glycerone phosphate from D-glucose: step 1/4. The enzyme has great affinity for glucose. Mannose, 2-deoxyglucose and glucosamine can serve as substrates. The polypeptide is Glucokinase (glkA) (Aspergillus niger).